Consider the following 427-residue polypeptide: Septin-8-B (427 aa).

One can recognise a Septin-type G domain in the interval 39-305 (QGFCFNILCV…ELYRRCKLEE (267 aa)). Residues 49–56 (GETGIGKS) are G1 motif. GTP contacts are provided by residues 49 to 56 (GETGIGKS), G104, 185 to 193 (KADTISKSE), G239, and R254. The tract at residues 101–104 (DTVG) is G3 motif. The tract at residues 184-187 (AKAD) is G4 motif. Residues 320-407 (LQETYEAKRK…RRKVAMETLQ (88 aa)) are a coiled coil. Over residues 406–418 (LQSQSFQATSQQP) the composition is skewed to polar residues. The disordered stretch occupies residues 406-427 (LQSQSFQATSQQPLKKDKDRKN).

The protein belongs to the TRAFAC class TrmE-Era-EngA-EngB-Septin-like GTPase superfamily. Septin GTPase family.

The protein is Septin-8-B (sept8-b) of Xenopus laevis (African clawed frog).